Here is a 130-residue protein sequence, read N- to C-terminus: Small ribosomal subunit protein uS11c (130 aa).

This sequence belongs to the universal ribosomal protein uS11 family. Part of the 30S ribosomal subunit.

It localises to the plastid. The protein resides in the chloroplast. In Chaetosphaeridium globosum (Charophycean green alga), this protein is Small ribosomal subunit protein uS11c.